The chain runs to 128 residues: Large ribosomal subunit protein bL12 (128 aa).

The protein belongs to the bacterial ribosomal protein bL12 family. In terms of assembly, homodimer. Part of the ribosomal stalk of the 50S ribosomal subunit. Forms a multimeric L10(L12)X complex, where L10 forms an elongated spine to which 2 to 4 L12 dimers bind in a sequential fashion. Binds GTP-bound translation factors.

In terms of biological role, forms part of the ribosomal stalk which helps the ribosome interact with GTP-bound translation factors. Is thus essential for accurate translation. The polypeptide is Large ribosomal subunit protein bL12 (Kineococcus radiotolerans (strain ATCC BAA-149 / DSM 14245 / SRS30216)).